A 406-amino-acid chain; its full sequence is Betaine--homocysteine S-methyltransferase 1 (406 aa).

The Hcy-binding domain maps to 11-314 (KGILERLNAG…YHIRAIAEEL (304 aa)). Residues lysine 40, lysine 93, and lysine 98 each carry the N6-succinyllysine modification. Cysteine 217 serves as a coordination point for Zn(2+). An N6-succinyllysine mark is found at lysine 232 and lysine 241. Residues cysteine 299 and cysteine 300 each contribute to the Zn(2+) site. Serine 330 is modified (phosphoserine). An N6-succinyllysine mark is found at lysine 340 and lysine 377.

Homotetramer. It depends on Zn(2+) as a cofactor.

It is found in the cytoplasm. Its subcellular location is the cytosol. The protein resides in the nucleus. It carries out the reaction L-homocysteine + glycine betaine = N,N-dimethylglycine + L-methionine. It participates in amine and polyamine degradation; betaine degradation; sarcosine from betaine: step 1/2. The protein operates within amino-acid biosynthesis; L-methionine biosynthesis via de novo pathway; L-methionine from L-homocysteine (BhmT route): step 1/1. In terms of biological role, involved in the regulation of homocysteine metabolism. Converts betaine and homocysteine to dimethylglycine and methionine, respectively. This reaction is also required for the irreversible oxidation of choline. This is Betaine--homocysteine S-methyltransferase 1 (BHMT) from Pongo abelii (Sumatran orangutan).